Consider the following 78-residue polypeptide: Small ribosomal subunit protein uS15c (78 aa).

Belongs to the universal ribosomal protein uS15 family. Part of the 30S ribosomal subunit.

The protein localises to the plastid. The protein resides in the chloroplast. The polypeptide is Small ribosomal subunit protein uS15c (rps15-A) (Saccharum officinarum (Sugarcane)).